Consider the following 391-residue polypeptide: 3-ketoacyl-CoA thiolase (391 aa).

Residue cysteine 95 is the Acyl-thioester intermediate of the active site. Active-site proton acceptor residues include histidine 347 and cysteine 377.

This sequence belongs to the thiolase-like superfamily. Thiolase family. As to quaternary structure, heterotetramer of two alpha chains (FadB) and two beta chains (FadA).

The protein resides in the cytoplasm. The catalysed reaction is an acyl-CoA + acetyl-CoA = a 3-oxoacyl-CoA + CoA. The protein operates within lipid metabolism; fatty acid beta-oxidation. In terms of biological role, catalyzes the final step of fatty acid oxidation in which acetyl-CoA is released and the CoA ester of a fatty acid two carbons shorter is formed. The sequence is that of 3-ketoacyl-CoA thiolase from Marinomonas sp. (strain MWYL1).